A 258-amino-acid chain; its full sequence is Casein kinase II subunit beta' (258 aa).

The span at 1–10 (MGSRSENVGT) shows a compositional bias: polar residues. The tract at residues 1–29 (MGSRSENVGTVTREGSRVEQDDVLMDDDS) is disordered.

The protein belongs to the casein kinase 2 subunit beta family. As to quaternary structure, tetramer composed of an alpha subunit, an alpha' subunit, one beta subunit and one beta' subunit. Interacts with FACT subunits POB3 and SPT16. Interaction with YTA7. In terms of processing, phosphorylated by alpha subunit. The N-terminus is blocked.

Functionally, regulatory subunit of casein kinase II/CK2. As part of the kinase complex regulates the basal catalytic activity of the alpha subunit a constitutively active serine/threonine-protein kinase that phosphorylates a large number of substrates containing acidic residues C-terminal to the phosphorylated serine or threonine. This chain is Casein kinase II subunit beta', found in Saccharomyces cerevisiae (strain ATCC 204508 / S288c) (Baker's yeast).